We begin with the raw amino-acid sequence, 514 residues long: 2,3-bisphosphoglycerate-independent phosphoglycerate mutase (514 aa).

Mn(2+) contacts are provided by Asp-14 and Ser-64. Ser-64 functions as the Phosphoserine intermediate in the catalytic mechanism. Residues His-125, 155 to 156 (RD), Arg-187, Arg-193, 263 to 266 (RADR), and Lys-336 each bind substrate. Mn(2+) is bound by residues Asp-403, His-407, Asp-444, His-445, and His-463.

Belongs to the BPG-independent phosphoglycerate mutase family. In terms of assembly, monomer. It depends on Mn(2+) as a cofactor.

It catalyses the reaction (2R)-2-phosphoglycerate = (2R)-3-phosphoglycerate. It participates in carbohydrate degradation; glycolysis; pyruvate from D-glyceraldehyde 3-phosphate: step 3/5. Functionally, catalyzes the interconversion of 2-phosphoglycerate and 3-phosphoglycerate. The chain is 2,3-bisphosphoglycerate-independent phosphoglycerate mutase from Salmonella paratyphi A (strain ATCC 9150 / SARB42).